The chain runs to 506 residues: Histidine ammonia-lyase (506 aa).

A cross-link (5-imidazolinone (Ala-Gly)) is located at residues 143–145 (ASG). S144 carries the post-translational modification 2,3-didehydroalanine (Ser).

Belongs to the PAL/histidase family. Contains an active site 4-methylidene-imidazol-5-one (MIO), which is formed autocatalytically by cyclization and dehydration of residues Ala-Ser-Gly.

It localises to the cytoplasm. The enzyme catalyses L-histidine = trans-urocanate + NH4(+). The protein operates within amino-acid degradation; L-histidine degradation into L-glutamate; N-formimidoyl-L-glutamate from L-histidine: step 1/3. In Salmonella paratyphi B (strain ATCC BAA-1250 / SPB7), this protein is Histidine ammonia-lyase.